The primary structure comprises 262 residues: Hemin import ATP-binding protein HmuV (262 aa).

In terms of domain architecture, ABC transporter spans 2-241; the sequence is IRASDISVRL…ETMEAVFGCR (240 aa). Position 34–41 (34–41) interacts with ATP; that stretch reads GPNGSGKT.

The protein belongs to the ABC transporter superfamily. Heme (hemin) importer (TC 3.A.1.14.5) family. As to quaternary structure, the complex is composed of two ATP-binding proteins (HmuV), two transmembrane proteins (HmuU) and a solute-binding protein (HmuT).

The protein resides in the cell inner membrane. Part of the ABC transporter complex HmuTUV involved in hemin import. Responsible for energy coupling to the transport system. The polypeptide is Hemin import ATP-binding protein HmuV (Rhizobium meliloti (strain 1021) (Ensifer meliloti)).